The primary structure comprises 550 residues: MKFLKRGVALALLAAFALTTQPAQAYEKDKTYKITILHTNDHHGHFWRSEYGEYGLAAQKTLVDSIRKEVAQEGGSVLLLSGGDINTGVPESDLQDAEPDFRGMNLIGYDAMAVGNHEFDNPLTVLRQQEKWAKFPFLYANIYQKSTGERLFKPWAIFTRQDIKIAVIGLTTDDTAKIGNPEYFTDIEFRKPAEEAKVVIQELNMNEKPDVIIATTHMGHYDNGDHGSNAPGDVEMARSLPAGSLAMIVGGHSQDPVCMASENKKQVNYVPGTPCAPDKQNGIWIVQAHEWGKYVGRADFEFRNGEMKMVNYQLIPVNLKKKVTWDNGKSERVLYTPEIAENPQMLSLLTPFQNKGKAQLEVKIGSVNGLLEGDRSKVRFVQTNMGRVILAAQIARTGADFGVMSGGGIRDSIEAGDITYKSVLKVQPFGNIVVYADMSGKEVVDYLTAVAQMKPDSGAYPQLANVSFVAKEGKLTDLKIKGEPVDPAKTYRMATLSFNATGGDGYPRIDNKPGYVNTGFIDAEVLKEFIQQNSPLDAAAFTPNGEVSWL.

A signal peptide spans Met-1–Ala-25. A divalent metal cation contacts are provided by Asp-41, His-43, Asp-84, Asn-116, His-217, His-252, and Gln-254. Cys-258 and Cys-275 are disulfide-bonded. Substrate is bound by residues Phe-429 and Phe-498–Asp-504.

The protein belongs to the 5'-nucleotidase family. A divalent metal cation is required as a cofactor.

It is found in the periplasm. The polypeptide is Silent protein UshA(0) (ushA) (Salmonella typhimurium (strain LT2 / SGSC1412 / ATCC 700720)).